We begin with the raw amino-acid sequence, 319 residues long: Thioredoxin reductase (319 aa).

Residue 37 to 44 coordinates FAD; sequence ERGVPGGQ. An intrachain disulfide couples cysteine 136 to cysteine 139. 279–288 lines the FAD pocket; that stretch reads DVRAKSLRQI.

It belongs to the class-II pyridine nucleotide-disulfide oxidoreductase family. Homodimer. The cofactor is FAD.

It is found in the cytoplasm. The catalysed reaction is [thioredoxin]-dithiol + NADP(+) = [thioredoxin]-disulfide + NADPH + H(+). This Listeria innocua serovar 6a (strain ATCC BAA-680 / CLIP 11262) protein is Thioredoxin reductase (trxB).